We begin with the raw amino-acid sequence, 127 residues long: Small ribosomal subunit protein uS13 (127 aa).

Belongs to the universal ribosomal protein uS13 family. Part of the 30S ribosomal subunit. Forms a loose heterodimer with protein S19. Forms two bridges to the 50S subunit in the 70S ribosome.

Located at the top of the head of the 30S subunit, it contacts several helices of the 16S rRNA. In the 70S ribosome it contacts the 23S rRNA (bridge B1a) and protein L5 of the 50S subunit (bridge B1b), connecting the 2 subunits; these bridges are implicated in subunit movement. Contacts the tRNAs in the A and P-sites. The sequence is that of Small ribosomal subunit protein uS13 from Roseiflexus sp. (strain RS-1).